The primary structure comprises 186 residues: UPF0340 protein SEQ_1951 (186 aa).

Belongs to the UPF0340 family.

The polypeptide is UPF0340 protein SEQ_1951 (Streptococcus equi subsp. equi (strain 4047)).